Consider the following 39-residue polypeptide: Phospholipase A2 (39 aa).

3 residues coordinate Ca(2+): Trp10, Gly12, and Gly14. A disulfide bridge links Cys11 with Cys33. The active site involves His36. Residue Asp37 coordinates Ca(2+).

It depends on Ca(2+) as a cofactor. Expressed uniformly in tentacles (at protein level).

Its subcellular location is the secreted. The protein resides in the nematocyst. It catalyses the reaction a 1,2-diacyl-sn-glycero-3-phosphocholine + H2O = a 1-acyl-sn-glycero-3-phosphocholine + a fatty acid + H(+). With respect to regulation, inhibited by morin and p-BPB. PA2 catalyzes the calcium-dependent hydrolysis of the 2-acyl groups in 3-sn-phosphoglycerides. Induces insulin secretion in isolated rat islets under high glucose concentration conditions, but not under low glucose concentration conditions. Increases perfusion pressure, renal vascular resistance, urinary flow, glomerular filtration rate, and potassium, sodium, and chloride excretion levels in rat kidney. Does not increase perfusion pressure in the rat mesenteric vascular bed. The sequence is that of Phospholipase A2 from Bunodosoma caissarum (Sea anemone).